The primary structure comprises 122 residues: Small ribosomal subunit protein uS13 (122 aa).

The disordered stretch occupies residues 97–122 (PVRGQRTKTNARTRKGPARTVAGKKK).

This sequence belongs to the universal ribosomal protein uS13 family. In terms of assembly, part of the 30S ribosomal subunit. Forms a loose heterodimer with protein S19. Forms two bridges to the 50S subunit in the 70S ribosome.

Located at the top of the head of the 30S subunit, it contacts several helices of the 16S rRNA. In the 70S ribosome it contacts the 23S rRNA (bridge B1a) and protein L5 of the 50S subunit (bridge B1b), connecting the 2 subunits; these bridges are implicated in subunit movement. Contacts the tRNAs in the A and P-sites. This is Small ribosomal subunit protein uS13 from Pelobacter propionicus (strain DSM 2379 / NBRC 103807 / OttBd1).